Here is a 170-residue protein sequence, read N- to C-terminus: Probable phospholipid hydroperoxide glutathione peroxidase (170 aa).

Residue Cys-44 is part of the active site.

It belongs to the glutathione peroxidase family.

Its subcellular location is the cytoplasm. It carries out the reaction a hydroperoxy polyunsaturated fatty acid + 2 glutathione = a hydroxy polyunsaturated fatty acid + glutathione disulfide + H2O. Its function is as follows. Protects cells and enzymes from oxidative damage, by catalyzing the reduction of hydrogen peroxide, lipid peroxides and organic hydroperoxide, by glutathione. This is Probable phospholipid hydroperoxide glutathione peroxidase (GPXMC1) from Mesembryanthemum crystallinum (Common ice plant).